The following is a 284-amino-acid chain: Tropomyosin alpha-3 chain (284 aa).

The residue at position 1 (methionine 1) is an N-acetylmethionine. The interval 1–43 is disordered; it reads MEAIKKKMQMLKLDKENALDRAEQAEAEQKQAEERSKQLEDEL. Residues 1-284 are a coiled coil; that stretch reads MEAIKKKMQM…DHALNDMTSI (284 aa). Glutamate 2 is subject to N-acetylalanine. Positions 12-40 are enriched in basic and acidic residues; sequence KLDKENALDRAEQAEAEQKQAEERSKQLE. Position 53 is a phosphothreonine (threonine 53). Serine 61 and serine 87 each carry phosphoserine. Threonine 108 is modified (phosphothreonine). A phosphoserine mark is found at serine 206 and serine 215. Position 228 is an N6-acetyllysine (leucine 228). Residue threonine 252 is modified to Phosphothreonine. Phosphotyrosine is present on tyrosine 261. At serine 271 the chain carries Phosphoserine. At threonine 282 the chain carries Phosphothreonine. Residue serine 283 is modified to Phosphoserine.

The protein belongs to the tropomyosin family. In terms of assembly, homodimer. Heterodimer of an alpha (TPM1, TPM3 or TPM4) and a beta (TPM2) chain. Interacts with TMOD1. Interacts with TNNT1.

The protein localises to the cytoplasm. Its subcellular location is the cytoskeleton. Functionally, binds to actin filaments in muscle and non-muscle cells. Plays a central role, in association with the troponin complex, in the calcium dependent regulation of vertebrate striated muscle contraction. Smooth muscle contraction is regulated by interaction with caldesmon. In non-muscle cells is implicated in stabilizing cytoskeleton actin filaments. This chain is Tropomyosin alpha-3 chain (TPM3), found in Bos taurus (Bovine).